Here is a 199-residue protein sequence, read N- to C-terminus: Holliday junction branch migration complex subunit RuvA (199 aa).

Positions 1-63 are domain I; the sequence is MIGCLIGEVF…EDAQQLYGFS (63 aa). The domain II stretch occupies residues 64-142; sequence DAQEKTIFRT…TLAQGTSSAA (79 aa). Residues 143 to 150 are flexible linker; the sequence is ALPQIQFV. The tract at residues 150 to 199 is domain III; that stretch reads VSNSPVAEAEAALQSLGYKPLEAQKAVAAVKADYTESADIIRAALKSMMK.

Belongs to the RuvA family. In terms of assembly, homotetramer. Forms an RuvA(8)-RuvB(12)-Holliday junction (HJ) complex. HJ DNA is sandwiched between 2 RuvA tetramers; dsDNA enters through RuvA and exits via RuvB. An RuvB hexamer assembles on each DNA strand where it exits the tetramer. Each RuvB hexamer is contacted by two RuvA subunits (via domain III) on 2 adjacent RuvB subunits; this complex drives branch migration. In the full resolvosome a probable DNA-RuvA(4)-RuvB(12)-RuvC(2) complex forms which resolves the HJ.

Its subcellular location is the cytoplasm. Its function is as follows. The RuvA-RuvB-RuvC complex processes Holliday junction (HJ) DNA during genetic recombination and DNA repair, while the RuvA-RuvB complex plays an important role in the rescue of blocked DNA replication forks via replication fork reversal (RFR). RuvA specifically binds to HJ cruciform DNA, conferring on it an open structure. The RuvB hexamer acts as an ATP-dependent pump, pulling dsDNA into and through the RuvAB complex. HJ branch migration allows RuvC to scan DNA until it finds its consensus sequence, where it cleaves and resolves the cruciform DNA. The chain is Holliday junction branch migration complex subunit RuvA from Acinetobacter baumannii (strain ACICU).